The chain runs to 235 residues: Putative N-acetylmannosamine-6-phosphate 2-epimerase (235 aa).

The protein belongs to the NanE family.

It catalyses the reaction an N-acyl-D-glucosamine 6-phosphate = an N-acyl-D-mannosamine 6-phosphate. It functions in the pathway amino-sugar metabolism; N-acetylneuraminate degradation; D-fructose 6-phosphate from N-acetylneuraminate: step 3/5. Functionally, converts N-acetylmannosamine-6-phosphate (ManNAc-6-P) to N-acetylglucosamine-6-phosphate (GlcNAc-6-P). The protein is Putative N-acetylmannosamine-6-phosphate 2-epimerase of Edwardsiella ictaluri (strain 93-146).